Consider the following 211-residue polypeptide: Glial cell line-derived neurotrophic factor (211 aa).

Positions 1–19 (MKLWDVVAVCLVLLHTASA) are cleaved as a signal peptide. Positions 20-75 (FPLPAGKRLLEAPAEDHSLGHRRVPFALTSDSNMPEDYPDQFDDVMDFIQATIKRL) are excised as a propeptide. A disordered region spans residues 76 to 113 (KRSPDKQAAALPRRERNRQAAAASPENSRGKGRRGQRG). 3 disulfide bridges follow: C118–C179, C145–C208, and C149–C210. N126 and N162 each carry an N-linked (GlcNAc...) asparagine glycan.

Belongs to the TGF-beta family. GDNF subfamily. As to quaternary structure, homodimer; disulfide-linked. Interacts with GFRA1 coreceptor and RET: forms a 2:2:2 ternary complex composed of GDNF ligand, GFRA1 and RET receptor. Interacts (via propeptide) with SORL1 (via N-terminal ectodomain); this interaction affects GDNF-regulated, but not constitutive secretion. Also interacts with SORL1 in complex with GFRA1; this interaction leads to GDNF endocytosis and lysosomal degradation. In terms of tissue distribution, expressed in both the central nervous system (CNS) and in non-CNS tissues, including the kidney, lung, bone, heart, liver, spleen, sciatic nerve and blood. Expressed in brain (at protein level). Localizes at the proximal ligature of the hypoglossal nerve.

Its subcellular location is the secreted. Neurotrophic factor that enhances survival and morphological differentiation of dopaminergic neurons and increases their high-affinity dopamine uptake. Acts by binding to its coreceptor, GFRA1, leading to autophosphorylation and activation of the RET receptor. May also modulate local neuronal effects in distal regions of the motor neuron. Involved in the development of the neural crest. This Rattus norvegicus (Rat) protein is Glial cell line-derived neurotrophic factor (Gdnf).